The chain runs to 578 residues: MDIQRSILIVALAVVSYLLVLQWNKDYGQPELPAASASMNTTQGLPDTPSAAGTSSDVPTAQSGAAGSEAADKPVAVSDKLIQVKTDVLDLAIDPRGGDIVQLGLLQYPRRLDRPDVPFPLFDNGRERTYLAQSGLTGADGPDASSAGRPLFHSAQGSYQLADGQNELVVDLSFSRDGVNYIKRFTFHRGLKADCSDKEKAQKKIECINENAYQVGVSYLIDNQSGKTWSGNLFAQLKRDGSADPSSTTATGVSTYLGAAVWTPDSPYKKISTKDMDKEQFKESVQGGWVAWLQHYFVTAWVPTKGEQHQVMTRKDGQGNYIVGFTGPTLSVPAGGKVETDLTLYAGPKLQKHLKELSPGLELTVDYGFLWFIAQPIFWLLQHIHSLIGNWGWSIIALTVLIKLAFFPLSAASYRSMARMRAVSPKMQAIKEQHGDDRQKMSQAMMELYKKEKINPLGGCLPILVQMPVFLSLYWVLLESVEMRQAPWLGWITDLSVKDPFFILPIVMGGTMLIQQMLNPTPPDPMQAKVMKLMPIIFTFFFLWFPAGLVLYWVVNNVLSIAQQWYITRKIEAAAKTA.

The chain crosses the membrane as a helical span at residues 3–23 (IQRSILIVALAVVSYLLVLQW). Residues 34–71 (AASASMNTTQGLPDTPSAAGTSSDVPTAQSGAAGSEAA) are disordered. Polar residues predominate over residues 37-65 (ASMNTTQGLPDTPSAAGTSSDVPTAQSGA). A run of 5 helical transmembrane segments spans residues 361–381 (LELT…FWLL), 387–407 (LIGN…LAFF), 457–477 (LGGC…YWVL), 500–520 (PFFI…MLNP), and 535–555 (PIIF…YWVV).

The protein belongs to the OXA1/ALB3/YidC family. Type 1 subfamily. In terms of assembly, interacts with the Sec translocase complex via SecD. Specifically interacts with transmembrane segments of nascent integral membrane proteins during membrane integration.

The protein resides in the cell inner membrane. Functionally, required for the insertion and/or proper folding and/or complex formation of integral membrane proteins into the membrane. Involved in integration of membrane proteins that insert both dependently and independently of the Sec translocase complex, as well as at least some lipoproteins. Aids folding of multispanning membrane proteins. This Pseudomonas paraeruginosa (strain DSM 24068 / PA7) (Pseudomonas aeruginosa (strain PA7)) protein is Membrane protein insertase YidC.